Here is a 119-residue protein sequence, read N- to C-terminus: Large ribosomal subunit protein uL18 (119 aa).

Belongs to the universal ribosomal protein uL18 family. In terms of assembly, part of the 50S ribosomal subunit; part of the 5S rRNA/L5/L18/L25 subcomplex. Contacts the 5S and 23S rRNAs.

Its function is as follows. This is one of the proteins that bind and probably mediate the attachment of the 5S RNA into the large ribosomal subunit, where it forms part of the central protuberance. The chain is Large ribosomal subunit protein uL18 from Jannaschia sp. (strain CCS1).